The chain runs to 363 residues: Mitogen-activated protein kinase 12 (363 aa).

Positions 25 to 309 (YKDLKQVGTG…AAEALAFPFF (285 aa)) constitute a Protein kinase domain. Residues 31–39 (VGTGAYGTV) and lysine 54 each bind ATP. The active-site Proton acceptor is the aspartate 151. A Phosphothreonine modification is found at threonine 181. The TXY motif lies at 181 to 183 (TGY). Residue tyrosine 183 is modified to Phosphotyrosine.

This sequence belongs to the protein kinase superfamily. CMGC Ser/Thr protein kinase family. MAP kinase subfamily. Mg(2+) is required as a cofactor. Post-translationally, dually phosphorylated on Thr-181 and Tyr-183, which activates the enzyme.

Its subcellular location is the cytoplasm. The enzyme catalyses L-seryl-[protein] + ATP = O-phospho-L-seryl-[protein] + ADP + H(+). It carries out the reaction L-threonyl-[protein] + ATP = O-phospho-L-threonyl-[protein] + ADP + H(+). Its activity is regulated as follows. Activated by threonine and tyrosine phosphorylation. In terms of biological role, serine/threonine kinase which acts as an essential component of the MAP kinase signal transduction pathway. MAPK12 is one of the four p38 MAPKs which play an important role in the cascades of cellular responses evoked by extracellular stimuli such as pro-inflammatory cytokines or physical stress leading to direct activation of transcription factors. Accordingly, p38 MAPKs phosphorylate a broad range of proteins and it has been estimated that they may have approximately 200 to 300 substrates each. Some of the targets are downstream kinases such as MAPKAPK2, which are activated through phosphorylation and further phosphorylate additional targets. This chain is Mitogen-activated protein kinase 12 (mapk12), found in Danio rerio (Zebrafish).